We begin with the raw amino-acid sequence, 37 residues long: Chitinase-like protein (37 aa).

The tract at residues 1–20 is disordered; sequence VLLSVGGDADTESPEKKNLG. The GH18 domain occupies 1 to 37; it reads VLLSVGGDADTESPEKKNLGGVSIVDLSMDDFRGLLT.

It belongs to the glycosyl hydrolase 18 family. IDGF subfamily. Glycosylated.

Its subcellular location is the secreted. Cooperates with insulin-like peptides to stimulate the proliferation, polarization and motility of imaginal disk cells. May act by stabilizing the binding of insulin-like peptides to its receptor through a simultaneous interaction with both molecules to form a multiprotein signaling complex. The sequence is that of Chitinase-like protein from Heliothis virescens (Tobacco budworm moth).